The sequence spans 335 residues: Holliday junction branch migration complex subunit RuvB (335 aa).

The tract at residues M1–Y183 is large ATPase domain (RuvB-L). ATP-binding positions include L22, R23, G64, K67, T68, T69, E130–Y132, R173, Y183, and R220. T68 contacts Mg(2+). The segment at T184–Q254 is small ATPAse domain (RuvB-S). The segment at P257 to V335 is head domain (RuvB-H). 3 residues coordinate DNA: R293, R312, and R317.

Belongs to the RuvB family. In terms of assembly, homohexamer. Forms an RuvA(8)-RuvB(12)-Holliday junction (HJ) complex. HJ DNA is sandwiched between 2 RuvA tetramers; dsDNA enters through RuvA and exits via RuvB. An RuvB hexamer assembles on each DNA strand where it exits the tetramer. Each RuvB hexamer is contacted by two RuvA subunits (via domain III) on 2 adjacent RuvB subunits; this complex drives branch migration. In the full resolvosome a probable DNA-RuvA(4)-RuvB(12)-RuvC(2) complex forms which resolves the HJ.

It localises to the cytoplasm. The enzyme catalyses ATP + H2O = ADP + phosphate + H(+). Functionally, the RuvA-RuvB-RuvC complex processes Holliday junction (HJ) DNA during genetic recombination and DNA repair, while the RuvA-RuvB complex plays an important role in the rescue of blocked DNA replication forks via replication fork reversal (RFR). RuvA specifically binds to HJ cruciform DNA, conferring on it an open structure. The RuvB hexamer acts as an ATP-dependent pump, pulling dsDNA into and through the RuvAB complex. RuvB forms 2 homohexamers on either side of HJ DNA bound by 1 or 2 RuvA tetramers; 4 subunits per hexamer contact DNA at a time. Coordinated motions by a converter formed by DNA-disengaged RuvB subunits stimulates ATP hydrolysis and nucleotide exchange. Immobilization of the converter enables RuvB to convert the ATP-contained energy into a lever motion, pulling 2 nucleotides of DNA out of the RuvA tetramer per ATP hydrolyzed, thus driving DNA branch migration. The RuvB motors rotate together with the DNA substrate, which together with the progressing nucleotide cycle form the mechanistic basis for DNA recombination by continuous HJ branch migration. Branch migration allows RuvC to scan DNA until it finds its consensus sequence, where it cleaves and resolves cruciform DNA. The polypeptide is Holliday junction branch migration complex subunit RuvB (Listeria monocytogenes serovar 1/2a (strain ATCC BAA-679 / EGD-e)).